Here is a 465-residue protein sequence, read N- to C-terminus: Cysteine--tRNA ligase (465 aa).

Zn(2+) is bound at residue Cys30. Residues 32–42 (ITVYDYCHVGH) carry the 'HIGH' region motif. Residues Cys214, His239, and Glu243 each contribute to the Zn(2+) site. The short motif at 271–275 (KMSKS) is the 'KMSKS' region element. Position 274 (Lys274) interacts with ATP.

Belongs to the class-I aminoacyl-tRNA synthetase family. Monomer. The cofactor is Zn(2+).

The protein resides in the cytoplasm. It catalyses the reaction tRNA(Cys) + L-cysteine + ATP = L-cysteinyl-tRNA(Cys) + AMP + diphosphate. The sequence is that of Cysteine--tRNA ligase from Burkholderia vietnamiensis (strain G4 / LMG 22486) (Burkholderia cepacia (strain R1808)).